The sequence spans 610 residues: UvrABC system protein C (610 aa).

The GIY-YIG domain occupies 16-94 (NQPGVYRMYN…IKQYLPKYNV (79 aa)). In terms of domain architecture, UVR spans 204–239 (NQVLSILVEKMEQASRELRFEDAAKARDQIQAIRRV).

This sequence belongs to the UvrC family. As to quaternary structure, interacts with UvrB in an incision complex.

It localises to the cytoplasm. In terms of biological role, the UvrABC repair system catalyzes the recognition and processing of DNA lesions. UvrC both incises the 5' and 3' sides of the lesion. The N-terminal half is responsible for the 3' incision and the C-terminal half is responsible for the 5' incision. In Vibrio cholerae serotype O1 (strain ATCC 39315 / El Tor Inaba N16961), this protein is UvrABC system protein C.